Reading from the N-terminus, the 205-residue chain is Holliday junction branch migration complex subunit RuvA (205 aa).

The segment at 1–64 (MIGKLKGIID…EDQIKLFGFR (64 aa)) is domain I. Residues 65 to 143 (TDTEREWFRL…ALSAVDPAVV (79 aa)) form a domain II region. Residues 144–154 (KLSGAIDDNRA) are flexible linker. Positions 154–205 (APRAVTDAISALVNLGYGQPQAAAAVATASRTAGEDAETAQLIKLGLKELSK) are domain III.

It belongs to the RuvA family. Homotetramer. Forms an RuvA(8)-RuvB(12)-Holliday junction (HJ) complex. HJ DNA is sandwiched between 2 RuvA tetramers; dsDNA enters through RuvA and exits via RuvB. An RuvB hexamer assembles on each DNA strand where it exits the tetramer. Each RuvB hexamer is contacted by two RuvA subunits (via domain III) on 2 adjacent RuvB subunits; this complex drives branch migration. In the full resolvosome a probable DNA-RuvA(4)-RuvB(12)-RuvC(2) complex forms which resolves the HJ.

It is found in the cytoplasm. In terms of biological role, the RuvA-RuvB-RuvC complex processes Holliday junction (HJ) DNA during genetic recombination and DNA repair, while the RuvA-RuvB complex plays an important role in the rescue of blocked DNA replication forks via replication fork reversal (RFR). RuvA specifically binds to HJ cruciform DNA, conferring on it an open structure. The RuvB hexamer acts as an ATP-dependent pump, pulling dsDNA into and through the RuvAB complex. HJ branch migration allows RuvC to scan DNA until it finds its consensus sequence, where it cleaves and resolves the cruciform DNA. In Rhodopseudomonas palustris (strain TIE-1), this protein is Holliday junction branch migration complex subunit RuvA.